Here is a 191-residue protein sequence, read N- to C-terminus: uncharacterized protein (191 aa).

Residues 5–65 (GDSREKILHT…IEAVTYTGKI (61 aa)) form the HTH tetR-type domain. A DNA-binding region (H-T-H motif) is located at residues 28-47 (GLNQIVKESGAPKGSLYHFF).

This is an uncharacterized protein from Bacillus subtilis (strain 168).